A 257-amino-acid polypeptide reads, in one-letter code: Indole-3-glycerol phosphate synthase (257 aa).

This sequence belongs to the TrpC family.

It catalyses the reaction 1-(2-carboxyphenylamino)-1-deoxy-D-ribulose 5-phosphate + H(+) = (1S,2R)-1-C-(indol-3-yl)glycerol 3-phosphate + CO2 + H2O. It functions in the pathway amino-acid biosynthesis; L-tryptophan biosynthesis; L-tryptophan from chorismate: step 4/5. The sequence is that of Indole-3-glycerol phosphate synthase from Phenylobacterium zucineum (strain HLK1).